Reading from the N-terminus, the 492-residue chain is Adenosylhomocysteinase (492 aa).

Substrate-binding residues include T68, D153, and E215. 216–218 (TTT) is a binding site for NAD(+). Positions 245 and 249 each coordinate substrate. NAD(+) is bound by residues N250, 279-284 (GYGDVG), E302, N337, 358-360 (IGH), and N406.

The protein belongs to the adenosylhomocysteinase family. NAD(+) serves as cofactor.

It is found in the cytoplasm. The catalysed reaction is S-adenosyl-L-homocysteine + H2O = L-homocysteine + adenosine. The protein operates within amino-acid biosynthesis; L-homocysteine biosynthesis; L-homocysteine from S-adenosyl-L-homocysteine: step 1/1. May play a key role in the regulation of the intracellular concentration of adenosylhomocysteine. The protein is Adenosylhomocysteinase of Mycobacterium marinum (strain ATCC BAA-535 / M).